The primary structure comprises 274 residues: 2,3,4,5-tetrahydropyridine-2,6-dicarboxylate N-succinyltransferase (274 aa).

2 residues coordinate substrate: arginine 104 and aspartate 141.

The protein belongs to the transferase hexapeptide repeat family. Homotrimer.

It is found in the cytoplasm. The catalysed reaction is (S)-2,3,4,5-tetrahydrodipicolinate + succinyl-CoA + H2O = (S)-2-succinylamino-6-oxoheptanedioate + CoA. It participates in amino-acid biosynthesis; L-lysine biosynthesis via DAP pathway; LL-2,6-diaminopimelate from (S)-tetrahydrodipicolinate (succinylase route): step 1/3. In Shewanella halifaxensis (strain HAW-EB4), this protein is 2,3,4,5-tetrahydropyridine-2,6-dicarboxylate N-succinyltransferase.